Reading from the N-terminus, the 399-residue chain is Ubiquitin-like modifier-activating enzyme 5 (399 aa).

ATP-binding residues include Gly76, Asp97, Lys120, Asn143, and Asn177. Cys219 and Cys222 together coordinate Zn(2+). Cys243 functions as the Glycyl thioester intermediate in the catalytic mechanism. The Zn(2+) site is built by Cys296 and Cys301.

The protein belongs to the ubiquitin-activating E1 family. UBA5 subfamily.

E1-like enzyme which activates UFM1. This is Ubiquitin-like modifier-activating enzyme 5 from Drosophila mojavensis (Fruit fly).